The sequence spans 1557 residues: ABC transporter atnG (1557 aa).

5 consecutive transmembrane segments (helical) span residues 27-47 (FTLY…LILA), 70-90 (LKLL…AFWM), 99-119 (LTIA…YLIH), 131-151 (IISI…RTIW), and 159-179 (VSAI…LETW). Residues Asn202 and Asn249 are each glycosylated (N-linked (GlcNAc...) asparagine). The next 6 membrane-spanning stretches (helical) occupy residues 256 to 276 (AGAM…AGVF), 311 to 331 (ATLL…ATAT), 385 to 405 (YIHD…LLYN), 412 to 432 (IAPI…AMMA), 490 to 510 (LLIA…IVSF), and 531 to 551 (LTSL…VESI). Residues 279-556 (LCQSGFIISQ…LVESISETAM (278 aa)) enclose the ABC transmembrane type-1 1 domain. One can recognise an ABC transporter 1 domain in the interval 593–829 (AFEVDVGWKN…LDYIQGFAIA (237 aa)). 625–632 (GAVGCGKT) lines the ATP pocket. Asn667 carries N-linked (GlcNAc...) asparagine glycosylation. Residues 882-902 (LVYFGLMAIFVFLQAFPTVWV) form a helical membrane-spanning segment. Positions 882–1162 (LVYFGLMAIF…LITDWTVLET (281 aa)) constitute an ABC transmembrane type-1 2 domain. Asn916 carries an N-linked (GlcNAc...) asparagine glycan. 4 helical membrane passes run 921–941 (IGVY…TACF), 996–1016 (AVLQ…IIAV), 1020–1040 (YITA…TFYM), and 1105–1125 (LSLV…GIAV). Residue Asn1132 is glycosylated (N-linked (GlcNAc...) asparagine). The chain crosses the membrane as a helical span at residues 1135–1155 (SLGLALVNVVSLSASVKALIT). Residues 1199–1431 (VEYKNVSAFY…PSVFRELYKS (233 aa)) form the ABC transporter 2 domain. Asn1203 and Asn1218 each carry an N-linked (GlcNAc...) asparagine glycan. 1233–1240 (GRSGSGKS) contacts ATP. Disordered stretches follow at residues 1439–1464 (ERQE…EELR) and 1503–1557 (RTRS…RGLH). Basic and acidic residues predominate over residues 1507-1522 (RSRDHSAERRESKRYS).

The protein belongs to the ABC transporter superfamily. ABCC family. Conjugate transporter (TC 3.A.1.208) subfamily.

The protein localises to the cell membrane. In terms of biological role, ABC transporter; part of the gene cluster that mediates the biosynthesis of aspercryptins, linear lipopeptides built from six amino acids including 2 highly unusual and nonproteogenic amino acids, 2-amino-octanoic acid (2aoa) and 2-amino-dodecanol (2adol). The polypeptide is ABC transporter atnG (Emericella nidulans (strain FGSC A4 / ATCC 38163 / CBS 112.46 / NRRL 194 / M139) (Aspergillus nidulans)).